Reading from the N-terminus, the 561-residue chain is DNA ligase (561 aa).

ATP is bound at residue Glu247. The active-site N6-AMP-lysine intermediate is Lys249. Positions 254, 269, 299, 339, 414, and 420 each coordinate ATP.

The protein belongs to the ATP-dependent DNA ligase family. In terms of assembly, monomer. Requires Mg(2+) as cofactor.

The catalysed reaction is ATP + (deoxyribonucleotide)n-3'-hydroxyl + 5'-phospho-(deoxyribonucleotide)m = (deoxyribonucleotide)n+m + AMP + diphosphate.. Its function is as follows. DNA ligase that seals nicks in double-stranded DNA during DNA replication, DNA recombination and DNA repair. In Pyrococcus furiosus (strain ATCC 43587 / DSM 3638 / JCM 8422 / Vc1), this protein is DNA ligase.